The primary structure comprises 328 residues: GTP 3',8-cyclase (328 aa).

The Radical SAM core domain maps to 9–229 (GFGRDVRYLR…DNGLNTGGPA (221 aa)). Residue R18 coordinates GTP. Residues C25 and C29 each contribute to the [4Fe-4S] cluster site. Y31 is a binding site for S-adenosyl-L-methionine. C32 is a binding site for [4Fe-4S] cluster. A GTP-binding site is contributed by R60. G64 provides a ligand contact to S-adenosyl-L-methionine. T94 provides a ligand contact to GTP. Residue S118 participates in S-adenosyl-L-methionine binding. Position 154 (K154) interacts with GTP. M188 is an S-adenosyl-L-methionine binding site. [4Fe-4S] cluster-binding residues include C252 and C255. Residue 257–259 (RVR) coordinates GTP. Position 269 (C269) interacts with [4Fe-4S] cluster.

This sequence belongs to the radical SAM superfamily. MoaA family. In terms of assembly, monomer and homodimer. [4Fe-4S] cluster serves as cofactor.

The catalysed reaction is GTP + AH2 + S-adenosyl-L-methionine = (8S)-3',8-cyclo-7,8-dihydroguanosine 5'-triphosphate + 5'-deoxyadenosine + L-methionine + A + H(+). It participates in cofactor biosynthesis; molybdopterin biosynthesis. Catalyzes the cyclization of GTP to (8S)-3',8-cyclo-7,8-dihydroguanosine 5'-triphosphate. This is GTP 3',8-cyclase from Rhodobacter capsulatus (Rhodopseudomonas capsulata).